A 998-amino-acid chain; its full sequence is Ephrin type-B receptor 3 (998 aa).

The N-terminal stretch at 1–33 is a signal peptide; the sequence is MARARPPPPPSPPPGLLPLLPPLLLLPLLLLPA. The Extracellular segment spans residues 34-559; sequence GCRALEETLM…AQQLQEQLPL (526 aa). Residues 39–217 form the Eph LBD domain; the sequence is EETLMDTKWV…FYKKCASTTA (179 aa). Cysteines 81 and 199 form a disulfide. 2 consecutive Fibronectin type-III domains span residues 339–451 and 452–545; these read VPSP…TNQA and APSE…TTSE. Asn351 and Asn445 each carry an N-linked (GlcNAc...) asparagine glycan. The chain crosses the membrane as a helical span at residues 560–580; it reads IVGSATAGLVFVVAVVVIAIV. At 581-998 the chain is on the cytoplasmic side; sequence CLRKQRHGSD…QMNQTLPVQV (418 aa). Position 614 is a phosphotyrosine; by autocatalysis (Tyr614). Residues 633 to 896 enclose the Protein kinase domain; sequence VKIEEVIGAG…QIVNTLDKLI (264 aa). ATP contacts are provided by residues 639–647 and Lys665; that span reads IGAGEFGEV. The Proton acceptor role is filled by Asp758. Residues 925-989 form the SAM domain; that stretch reads TTFTTVGDWL…LSSIQDMRLQ (65 aa). The PDZ-binding motif lies at 996-998; it reads VQV.

This sequence belongs to the protein kinase superfamily. Tyr protein kinase family. Ephrin receptor subfamily. As to quaternary structure, heterotetramer upon binding of the ligand. The heterotetramer is composed of an ephrin dimer and a receptor dimer. Oligomerization is probably required to induce biological responses. Phosphorylated. Autophosphorylates upon ligand-binding. Autophosphorylation on Tyr-614 is required for interaction with SH2 domain-containing proteins. Post-translationally, ubiquitinated by RNF186, mainly through 'Lys-48' and 'Lys-63'-linked polyubiquitin chains. As to expression, ubiquitous.

It is found in the cell membrane. Its subcellular location is the cell projection. It localises to the dendrite. The catalysed reaction is L-tyrosyl-[protein] + ATP = O-phospho-L-tyrosyl-[protein] + ADP + H(+). Receptor tyrosine kinase which binds promiscuously transmembrane ephrin-B family ligands residing on adjacent cells, leading to contact-dependent bidirectional signaling into neighboring cells. The signaling pathway downstream of the receptor is referred to as forward signaling while the signaling pathway downstream of the ephrin ligand is referred to as reverse signaling. Generally has an overlapping and redundant function with EPHB2. Like EPHB2, functions in axon guidance during development regulating for instance the neurons forming the corpus callosum and the anterior commissure, 2 major interhemispheric connections between the temporal lobes of the cerebral cortex. In addition to its role in axon guidance also plays an important redundant role with other ephrin-B receptors in development and maturation of dendritic spines and the formation of excitatory synapses. Controls other aspects of development through regulation of cell migration and positioning. This includes angiogenesis, palate development and thymic epithelium development for instance. Forward and reverse signaling through the EFNB2/EPHB3 complex also regulate migration and adhesion of cells that tubularize the urethra and septate the cloaca. Finally, plays an important role in intestinal epithelium differentiation segregating progenitor from differentiated cells in the crypt. This is Ephrin type-B receptor 3 (EPHB3) from Homo sapiens (Human).